Consider the following 395-residue polypeptide: ATP phosphoribosyltransferase regulatory subunit (395 aa).

This sequence belongs to the class-II aminoacyl-tRNA synthetase family. HisZ subfamily. In terms of assembly, heteromultimer composed of HisG and HisZ subunits.

The protein localises to the cytoplasm. It functions in the pathway amino-acid biosynthesis; L-histidine biosynthesis; L-histidine from 5-phospho-alpha-D-ribose 1-diphosphate: step 1/9. In terms of biological role, required for the first step of histidine biosynthesis. May allow the feedback regulation of ATP phosphoribosyltransferase activity by histidine. This is ATP phosphoribosyltransferase regulatory subunit from Azotobacter vinelandii (strain DJ / ATCC BAA-1303).